A 459-amino-acid polypeptide reads, in one-letter code: Sperm-tail PG-rich repeat-containing protein 2 (459 aa).

STPGR repeat units follow at residues 21–30, 63–73, 119–148, 157–203, 213–243, 257–268, 351–377, 400–410, and 433–443; these read VGPGSYQVPF, PGPGHYNVSEA, TLGP…NSSG, GPGP…QEKK, TPAP…FGQS, PGPGFYNVLNNT, PAPG…PRSL, GPGPAAYNPVL, and TPGPATYEISQ.

This is Sperm-tail PG-rich repeat-containing protein 2 (STPG2) from Homo sapiens (Human).